A 574-amino-acid chain; its full sequence is Hyaluronan synthase 3 (574 aa).

At 1–15 (MPVSLSTALRVVGTS) the chain is on the cytoplasmic side. The helical transmembrane segment at 16 to 36 (LFALAVLGGILAAYVTGYQFI) threads the bilayer. Residues 37–44 (HTEKHYLS) lie on the Extracellular side of the membrane. Residues 45–65 (FGLYGAILGLHLFIQSLFAFL) traverse the membrane as a helical segment. The Cytoplasmic segment spans residues 66–398 (EHRRMRAERQ…NALWFHKHHL (333 aa)). A helical membrane pass occupies residues 399–419 (WMTYESVVTGFFPFFLIATVI). Over 420–429 (QLFYRGRIWN) the chain is Extracellular. The helical transmembrane segment at 430–450 (ILLFLLTVQLVGIIKATYACF) threads the bilayer. Residues 451–456 (LRGSAE) lie on the Cytoplasmic side of the membrane. The chain crosses the membrane as a helical span at residues 457-477 (MIFVSLYALLYMSSLLPAKMF). The Extracellular segment spans residues 478–494 (AIATINKSGWGTSGRRT). Residues 495–515 (IVVNFVGLLPVSVWAAVLLGG) traverse the membrane as a helical segment. Residues 516-530 (LAYTAYSQDLLSDTE) are Cytoplasmic-facing. Residues 531 to 551 (VAFLISGAVLYACYWVALLTL) form a helical membrane-spanning segment. The Extracellular portion of the chain corresponds to 552–574 (YLAMVARRCGKRKEQCGLVFAEV).

This sequence belongs to the NodC/HAS family. It depends on Mg(2+) as a cofactor. Post-translationally, O-GlcNAcylation increases the hyaluronan synthase activity, HAS3 stability and its plasma membrane residence. The concentration of UDP-GlcNAc controls the level of O-GlcNAc modification.

The protein localises to the cell membrane. It localises to the golgi apparatus membrane. Its subcellular location is the golgi apparatus. It is found in the trans-Golgi network membrane. The protein resides in the cytoplasmic vesicle. The enzyme catalyses [hyaluronan](n) + UDP-N-acetyl-alpha-D-glucosamine = N-acetyl-beta-D-glucosaminyl-(1-&gt;4)-[hyaluronan](n) + UDP + H(+). It catalyses the reaction N-acetyl-beta-D-glucosaminyl-(1-&gt;4)-[hyaluronan](n) + UDP-alpha-D-glucuronate = [hyaluronan](n+1) + UDP + H(+). Its pathway is glycan biosynthesis; hyaluronan biosynthesis. Catalyzes the addition of GlcNAc or GlcUA monosaccharides to the nascent hyaluronan polymer. Therefore, it is essential to hyaluronan synthesis a major component of most extracellular matrices that has a structural role in tissues architectures and regulates cell adhesion, migration and differentiation. This is one of three isoenzymes responsible for cellular hyaluronan synthesis. This is Hyaluronan synthase 3 (HAS3) from Gallus gallus (Chicken).